We begin with the raw amino-acid sequence, 166 residues long: Large ribosomal subunit protein uL10 (166 aa).

This sequence belongs to the universal ribosomal protein uL10 family. In terms of assembly, part of the ribosomal stalk of the 50S ribosomal subunit. The N-terminus interacts with L11 and the large rRNA to form the base of the stalk. The C-terminus forms an elongated spine to which L12 dimers bind in a sequential fashion forming a multimeric L10(L12)X complex.

Its function is as follows. Forms part of the ribosomal stalk, playing a central role in the interaction of the ribosome with GTP-bound translation factors. The chain is Large ribosomal subunit protein uL10 from Streptococcus pyogenes serotype M28 (strain MGAS6180).